Consider the following 420-residue polypeptide: F-box protein At5g07610 (420 aa).

The segment at 1–25 (MSSCSRTRTKAPRSARSRRNGGFSS) is disordered. Basic residues predominate over residues 7 to 19 (TRTKAPRSARSRR). Positions 27–77 (SATIVADIDDVLIQILSFLPIKTLLRFKRVSKRWLSLITNPVFSNRVIKSN) constitute an F-box domain.

This chain is F-box protein At5g07610, found in Arabidopsis thaliana (Mouse-ear cress).